Here is a 746-residue protein sequence, read N- to C-terminus: Eukaryotic translation initiation factor 3 subunit B (746 aa).

A compositionally biased stretch (basic and acidic residues) spans 1–11; the sequence is MAPSYEHLREA. Residues 1-20 are disordered; that stretch reads MAPSYEHLREADLDEDEFDE. The region spanning 42–128 is the RRM domain; it reads TFVVIDGLPE…HTLRVNKLMD (87 aa). WD repeat units follow at residues 195-234, 247-294, 307-346, 349-386, 458-500, 517-560, and 575-620; these read DRPN…RLGR, PQEN…RSFA, PRKH…LLDK, IKVE…IGSN, TIKD…FFCP, LDKR…EKPE, and ADHY…LREE.

This sequence belongs to the eIF-3 subunit B family. Component of the eukaryotic translation initiation factor 3 (eIF-3) complex.

The protein localises to the cytoplasm. In terms of biological role, RNA-binding component of the eukaryotic translation initiation factor 3 (eIF-3) complex, which is involved in protein synthesis of a specialized repertoire of mRNAs and, together with other initiation factors, stimulates binding of mRNA and methionyl-tRNAi to the 40S ribosome. The eIF-3 complex specifically targets and initiates translation of a subset of mRNAs involved in cell proliferation. This is Eukaryotic translation initiation factor 3 subunit B from Pyricularia oryzae (strain 70-15 / ATCC MYA-4617 / FGSC 8958) (Rice blast fungus).